Consider the following 195-residue polypeptide: ATP-dependent Clp protease proteolytic subunit (195 aa).

S98 functions as the Nucleophile in the catalytic mechanism. H123 is an active-site residue.

Belongs to the peptidase S14 family. Fourteen ClpP subunits assemble into 2 heptameric rings which stack back to back to give a disk-like structure with a central cavity, resembling the structure of eukaryotic proteasomes.

The protein localises to the cytoplasm. It carries out the reaction Hydrolysis of proteins to small peptides in the presence of ATP and magnesium. alpha-casein is the usual test substrate. In the absence of ATP, only oligopeptides shorter than five residues are hydrolyzed (such as succinyl-Leu-Tyr-|-NHMec, and Leu-Tyr-Leu-|-Tyr-Trp, in which cleavage of the -Tyr-|-Leu- and -Tyr-|-Trp bonds also occurs).. In terms of biological role, cleaves peptides in various proteins in a process that requires ATP hydrolysis. Has a chymotrypsin-like activity. Plays a major role in the degradation of misfolded proteins. This Wolinella succinogenes (strain ATCC 29543 / DSM 1740 / CCUG 13145 / JCM 31913 / LMG 7466 / NCTC 11488 / FDC 602W) (Vibrio succinogenes) protein is ATP-dependent Clp protease proteolytic subunit.